A 632-amino-acid chain; its full sequence is 1-deoxy-D-xylulose-5-phosphate synthase (632 aa).

A disordered region spans residues 1–25 (MPTTFHEIPRKRPTTPLLDRANTPD). Thiamine diphosphate contacts are provided by residues H87 and 128-130 (GHS). A Mg(2+)-binding site is contributed by D159. Residues 160 to 161 (GA), N188, F295, and E378 contribute to the thiamine diphosphate site. N188 is a Mg(2+) binding site.

Belongs to the transketolase family. DXPS subfamily. As to quaternary structure, homodimer. It depends on Mg(2+) as a cofactor. Thiamine diphosphate is required as a cofactor.

The enzyme catalyses D-glyceraldehyde 3-phosphate + pyruvate + H(+) = 1-deoxy-D-xylulose 5-phosphate + CO2. Its pathway is metabolic intermediate biosynthesis; 1-deoxy-D-xylulose 5-phosphate biosynthesis; 1-deoxy-D-xylulose 5-phosphate from D-glyceraldehyde 3-phosphate and pyruvate: step 1/1. Catalyzes the acyloin condensation reaction between C atoms 2 and 3 of pyruvate and glyceraldehyde 3-phosphate to yield 1-deoxy-D-xylulose-5-phosphate (DXP). This Pseudomonas fluorescens (strain Pf0-1) protein is 1-deoxy-D-xylulose-5-phosphate synthase.